The sequence spans 257 residues: tRNA pseudouridine synthase A (257 aa).

Catalysis depends on D53, which acts as the Nucleophile. Y111 serves as a coordination point for substrate.

The protein belongs to the tRNA pseudouridine synthase TruA family. In terms of assembly, homodimer.

The catalysed reaction is uridine(38/39/40) in tRNA = pseudouridine(38/39/40) in tRNA. Formation of pseudouridine at positions 38, 39 and 40 in the anticodon stem and loop of transfer RNAs. This chain is tRNA pseudouridine synthase A, found in Xanthomonas euvesicatoria pv. vesicatoria (strain 85-10) (Xanthomonas campestris pv. vesicatoria).